Reading from the N-terminus, the 487-residue chain is Serine/threonine-protein kinase 4 (487 aa).

Met1 is subject to N-acetylmethionine. A Phosphothreonine modification is found at Thr3. One can recognise a Protein kinase domain in the interval 30 to 281 (FDVLEKLGEG…ATQLLQHPFV (252 aa)). ATP is bound by residues 36-44 (LGEGSYGSV) and Lys59. Catalysis depends on Asp149, which acts as the Proton acceptor. Thr183 is modified (phosphothreonine; by autocatalysis). Ser265 bears the Phosphoserine mark. A coiled-coil region spans residues 290 to 310 (LRDLINEAMDVKLKRQESQQR). The span at 303–312 (KRQESQQREV) shows a compositional bias: basic and acidic residues. The interval 303–332 (KRQESQQREVDQDDEENSEEDEMDSGTMVR) is disordered. The segment covering 313–326 (DQDDEENSEEDEMD) has biased composition (acidic residues). Ser320 is modified (phosphoserine). Residues Thr340 and Thr367 each carry the phosphothreonine modification. Thr387 is subject to Phosphothreonine; by PKB/AKT1. Phosphoserine occurs at positions 410 and 414. Tyr433 is subject to Phosphotyrosine. The 48-residue stretch at 433-480 (YEFLKSWTVEDLQKRLLALDPMMEQEIEEIRQKYQSKRQPILDAIEAK) folds into the SARAH domain.

This sequence belongs to the protein kinase superfamily. STE Ser/Thr protein kinase family. STE20 subfamily. As to quaternary structure, homodimer; mediated via the coiled-coil region. Interacts with NORE1, which inhibits autoactivation. Interacts with and stabilizes SAV1. Interacts with RASSF1. Interacts with FOXO3. Interacts with RASSF2 (via SARAH domain). Interacts with AR, PKB/AKT1, TNNI3 and SIRT1. Interacts with DLG5 (via PDZ domain 3). Interacts with MARK3 and SCRIB in the presence of DLG5. Requires Mg(2+) as cofactor. In terms of processing, autophosphorylated on serine and threonine residues. Phosphorylation at Thr-387 by PKB/AKT1, leads to inhibition of its: kinase activity, nuclear translocation and autophosphorylation at Thr-183. It also diminishes its cleavage by caspases and its ability to phosphorylate FOXO3. Proteolytically cleaved by caspase-3 during apoptosis at Asp-326 and Asp-349 resulting in a 37 kDa or a 39 kDa subunit respectively. The 39 kDa subunit is further cleaved into the 37 kDa form. Proteolytic cleavage results in kinase activation and nuclear translocation of the truncated form (MST1/N). It is less likely that cleavage at Asp-349 is a prerequisite for activation as this site is not conserved in the murine ortholog.

It is found in the cytoplasm. The protein resides in the nucleus. The enzyme catalyses L-seryl-[protein] + ATP = O-phospho-L-seryl-[protein] + ADP + H(+). It catalyses the reaction L-threonyl-[protein] + ATP = O-phospho-L-threonyl-[protein] + ADP + H(+). With respect to regulation, inhibited by the C-terminal non-catalytic region. Activated by caspase-cleavage. Full activation also requires homodimerization and autophosphorylation of Thr-183. Activated by RASSF1 which acts by preventing its dephosphorylation. Its function is as follows. Stress-activated, pro-apoptotic kinase which, following caspase-cleavage, enters the nucleus and induces chromatin condensation followed by internucleosomal DNA fragmentation. Key component of the Hippo signaling pathway which plays a pivotal role in organ size control and tumor suppression by restricting proliferation and promoting apoptosis. The core of this pathway is composed of a kinase cascade wherein STK3/MST2 and STK4/MST1, in complex with its regulatory protein SAV1, phosphorylates and activates LATS1/2 in complex with its regulatory protein MOB1, which in turn phosphorylates and inactivates YAP1 oncoprotein and WWTR1/TAZ. Phosphorylation of YAP1 by LATS2 inhibits its translocation into the nucleus to regulate cellular genes important for cell proliferation, cell death, and cell migration. STK3/MST2 and STK4/MST1 are required to repress proliferation of mature hepatocytes, to prevent activation of facultative adult liver stem cells (oval cells), and to inhibit tumor formation. Phosphorylates 'Ser-14' of histone H2B (H2BS14ph) during apoptosis. Phosphorylates FOXO3 upon oxidative stress, which results in its nuclear translocation and cell death initiation. Phosphorylates MOBKL1A, MOBKL1B and RASSF2. Phosphorylates TNNI3 (cardiac Tn-I) and alters its binding affinity to TNNC1 (cardiac Tn-C) and TNNT2 (cardiac Tn-T). Phosphorylates FOXO1 on 'Ser-212' and regulates its activation and stimulates transcription of PMAIP1 in a FOXO1-dependent manner. Phosphorylates SIRT1 and inhibits SIRT1-mediated p53/TP53 deacetylation, thereby promoting p53/TP53 dependent transcription and apoptosis upon DNA damage. Acts as an inhibitor of PKB/AKT1. Phosphorylates AR on 'Ser-650' and suppresses its activity by intersecting with PKB/AKT1 signaling and antagonizing formation of AR-chromatin complexes. The protein is Serine/threonine-protein kinase 4 (STK4) of Macaca mulatta (Rhesus macaque).